The following is a 960-amino-acid chain: MLMLHVKRNTCEHTFKCPPPACYSPSSPVQILEDPSYFFPDFQLYPGRHEASLTVEANSSIREKVVEDPLCNFHPPNFPRIPEVEMRGSEDAAAGTVLQRLIQEQLRYGTPTENMNLLAIQHQATGSAGPAHPTNFSSTENLAQEDPQMVYQSARQEPQGQEHQVDNTVMEKQVRSAQPQQNNEELPTYEEAKAQSQFFRGQQPPPPPPQQQPGAVGHSYYMAGGASQKARTEGRPTVSRANSGQAHKDEALKELKQGHVRSLSERIMQLSLERNGAKQHLPGPGNGKAFKAGGGPSPAQPAAKMLDPRGPPPEYPFKTKQMVSPVSKTQEHGLFYSDQHPGLLHEMVKPYPAPQPARTEVAVLRYQPPPEYGVTSRPCQLPFPSTAQQHSPVSSQNSSVSGPLHSVPLPLAPPMALGAAPPPPAASPSQQLGPDAFAIVERAQQMVEILTEENRVLHQELQGYYDNADKLHKFEKELQRISEAYESLVKSTTKRESLDKAMRNKLEGEIRRLHDFNRDLRDRLETANRQLSSREYDGHEDRAAEGLYASQNKEFLKEKEKLEMELAAVRTASEDHRRHIEILDQALSNAQARVIKLEEELREKQAYVEKVEKLQQALTQLQSACEKREQMERRLRTWLERELDALRTQQKHGNSQPASLPEYNAPALMELVREKEERILALEADMTKWEQKYVEESAIRHFAMSAAATAAAERDTTIVNHSRNGSYGESSLEAHIWQEEEEVVQATRRCQDMEYTIKNLHAKIIEKDAMIKVLQQRSRKDAGKTDSSSLRPARSVPSIAAATGTHSRQTSLTSSQLAEERKEEKTWKGSIATGLLLGKEHNDHASTPLLPTPSAATLSPPTPGTSASSAHAKTGSKDSSTQTDKSAELFWPGVASLPTRSRLSGTPSNSPVLKHPAAKGTAEKLENSPGHGKSPDHKGRVSNLLHKPEFPDGEMMEVLI.

Residues 196-248 (SQFFRGQQPPPPPPQQQPGAVGHSYYMAGGASQKARTEGRPTVSRANSGQAHK) are disordered. Phosphoserine occurs at positions 243, 271, and 297. Residues 261-281 (RSLSERIMQLSLERNGAKQHL) adopt a coiled-coil conformation. 3 disordered regions span residues 277–317 (AKQH…EYPF), 381–407 (LPFPSTAQQHSPVSSQNSSVSGPLHSV), and 413–432 (PPMALGAAPPPPAASPSQQL). Positions 388 to 401 (QQHSPVSSQNSSVS) are enriched in low complexity. Coiled coils occupy residues 440 to 641 (VERA…WLER) and 667 to 697 (ALMELVREKEERILALEADMTKWEQKYVEES). The residue at position 722 (Ser-722) is a Phosphoserine. Positions 731-761 (SLEAHIWQEEEEVVQATRRCQDMEYTIKNLH) form a coiled coil. The segment at 775–826 (QQRSRKDAGKTDSSSLRPARSVPSIAAATGTHSRQTSLTSSQLAEERKEEKT) is disordered. A phosphoserine mark is found at Ser-795, Ser-807, and Ser-830. The span at 804–817 (GTHSRQTSLTSSQL) shows a compositional bias: polar residues. The interval 842 to 952 (NDHASTPLLP…NLLHKPEFPD (111 aa)) is disordered. Residues 845–870 (ASTPLLPTPSAATLSPPTPGTSASSA) are compositionally biased toward low complexity. Positions 898-911 (PTRSRLSGTPSNSP) are enriched in polar residues. Ser-904 is modified (phosphoserine). The residue at position 906 (Thr-906) is a Phosphothreonine. Position 910 is a phosphoserine (Ser-910). A PDZ-binding motif is present at residues 957–960 (EVLI).

Belongs to the angiomotin family. Post-translationally, polyubiquitinated by NEDD4, leading to proteasomal degradation.

The protein resides in the cell junction. It is found in the tight junction. In terms of biological role, inhibits the Wnt/beta-catenin signaling pathway, probably by recruiting CTNNB1 to recycling endosomes and hence preventing its translocation to the nucleus. The sequence is that of Angiomotin-like protein 1 (AMOTL1) from Bos taurus (Bovine).